Here is a 502-residue protein sequence, read N- to C-terminus: Cytochrome P450 monooxygenase pyr9 (502 aa).

A helical transmembrane segment spans residues 5–25 (EDASIGTVWVTCLLAVGLYFI). N-linked (GlcNAc...) asparagine glycans are attached at residues Asn-205, Asn-291, and Asn-372. Cys-437 contacts heme.

It belongs to the cytochrome P450 family. The cofactor is heme.

It is found in the membrane. It participates in secondary metabolite biosynthesis; terpenoid biosynthesis. Its function is as follows. Cytochrome P450 monooxygenase; part of the gene cluster that mediates the biosynthesis of pyripyropene A, a specific human acyl-coenzyme A:cholesterol acyltransferase 2 inhibitor. The first step of the pathway is the synthesis of nicotinyl-CoA from nicotinic acid by the nicotinic acid-CoA ligase pyr1. Nicotinyl-CoA is then a substrate of polyketide synthase pyr2 to produce 4-hydroxy-6-(3-pyridinyl)-2H-pyran-2-one (HPPO) which is further prenylated by the polyprenyl transferase pyr6 to yield farnesyl-HPPO. The next steps consist of an epoxidation of farnesyl-HPPO to epoxyfarnesyl-HPPO by FAD-dependent monooxygenase pyr5 and a cyclization of the terpenoid portion by the terpene cyclase pyr4 to yield deacetyl-pyripyropene E. The 2 cytochrome P450 monooxygenases pyr3 and pyr9, and the 2 acetyltransferases pyr7 and pyr8 are involved in the conversion of deacetyl-pyripyropene E into pyripyropene A through several cycles of oxidation and acetylation steps. Pyr7 acetylates deacetyl-pyripyropene E to pyripyropene E which is oxidized to 11-deacetyl-pyripyropene O by pyr3, which is in turn acetylated into pyripyropene O by pyr8. Pyripyropene O is then oxidized to deacetyl-pyripyropene A by pyr9. Deacetyl-pyripyropene A is finally acetylated to pyripyropene A by pyr8. In Aspergillus fumigatus (strain ATCC MYA-4609 / CBS 101355 / FGSC A1100 / Af293) (Neosartorya fumigata), this protein is Cytochrome P450 monooxygenase pyr9.